A 458-amino-acid chain; its full sequence is Neuronal acetylcholine receptor subunit beta-3 (458 aa).

The N-terminal stretch at 1–21 (MLPDFMLVLIVLGIPSSATTG) is a signal peptide. Residues 22–237 (FNSIAENEDA…VLRRLPLFYT (216 aa)) lie on the Extracellular side of the membrane. Residues N51, N138, and N166 are each glycosylated (N-linked (GlcNAc...) asparagine). A disulfide bond links C153 and C167. 3 helical membrane-spanning segments follow: residues 238-258 (LFLIIPCLGLSFLTVLVFYLP), 267-287 (LSTSVLVSLTVFLLVIEEIIP), and 300-320 (LLFIMIFVTLSIIVTVFVINV). The Cytoplasmic segment spans residues 321-428 (HHRSSSTYHP…WKFVAQVLDR (108 aa)). A helical membrane pass occupies residues 429 to 449 (IFLWLFLIVSVTGSVLIFTPA).

The protein belongs to the ligand-gated ion channel (TC 1.A.9) family. Acetylcholine receptor (TC 1.A.9.1) subfamily. Beta-3/CHRNB3 sub-subfamily. In terms of assembly, neuronal AChR seems to be composed of two different type of subunits: alpha and beta. CHRNB3/beta-3 subunit is only able to form functional nAChRs when co-assembled with another beta subunit. Participates in pentameric assemblies along with CHRNA4/alpha-4 and CHRNB2/beta-2 subunits and with CHRNA6/alpha-6 as well, forming stoichiometries such as (CHRNA3:CHRNB4)2:CHRNB3, (CHRNA4:CHRNB2)2:CHRNB3 or (CHRNA6:CHRNB2)2:CHRNB3.

It localises to the synaptic cell membrane. Its subcellular location is the cell membrane. It catalyses the reaction Ca(2+)(in) = Ca(2+)(out). The enzyme catalyses K(+)(in) = K(+)(out). It carries out the reaction Na(+)(in) = Na(+)(out). With respect to regulation, activated by a myriad of ligands such as acetylcholine, cytisine, nicotine, choline and epibatidine. Its function is as follows. Component of neuronal acetylcholine receptors (nAChRs) that function as pentameric, ligand-gated cation channels with high calcium permeability among other activities. nAChRs are excitatory neurotrasnmitter receptors formed by a collection of nAChR subunits known to mediate synaptic transmission in the nervous system and the neuromuscular junction. Each nAchR subunit confers differential attributes to channel properties, including activation, deactivation and desensitization kinetics, pH sensitivity, cation permeability, and binding to allosteric modulators. Has an accessory rather than functional role and is only able to form functional nAChRs when co-assembled with another beta subunit. Participates in pentameric assemblies along with CHRNA3, CHRNA4, CHRNA6, CHRNB2 and CHRNB4. Modulates receptor assembly and increases receptor sensitivity to nicotine when associated with CHRNB2, CHRNA4 and/or CHRNA6 as well as CHRNA3 and CHRNB4. Seems to play a role in nicotine addiction. This Homo sapiens (Human) protein is Neuronal acetylcholine receptor subunit beta-3.